Reading from the N-terminus, the 339-residue chain is MPSYIVVGGQWGDEGKGSIIAYLAIHDKPEVIARGGVGTNAGHSVFINGKKYAVRQLPTGFMNENARLLVGAGVLVDPEVFFHELEHLKDFNVRGRIGLDYRCTVIEPGHKELDRSNGYLHGKIGTTGSGCGPANADRALRKAKQVKDLKELEPYLTDVAQEVNEALDEGKLVLVEGTQGFGLSLYYGSYPYVTSKDTSASAIASDVGIGPTRVDDVIVVFKSFPTRVGAGPFPTEMSEEEAERMGLVEYGTVTGRRRRVGWFDFEFARYSARINGATMLAVTMLDKYDKEAFGVTDFNKLPQKAKDFIAEIEEKVGVPVALIKTGPELEHIIDLRENI.

GTP contacts are provided by residues 12–18 (GDEGKGS) and 42–44 (GHS). Residue Asp-13 is the Proton acceptor of the active site. Mg(2+) contacts are provided by Asp-13 and Gly-42. IMP-binding positions include 13 to 16 (DEGK), 40 to 43 (NAGH), Thr-127, Arg-141, Gln-179, Thr-194, and Arg-256. The active-site Proton donor is the His-43. Position 252-258 (252-258 (TVTGRRR)) interacts with substrate. GTP-binding positions include Arg-258, 284–286 (MLD), and 324–326 (KTG).

The protein belongs to the adenylosuccinate synthetase family. As to quaternary structure, homodimer. Mg(2+) serves as cofactor.

It is found in the cytoplasm. The enzyme catalyses IMP + L-aspartate + GTP = N(6)-(1,2-dicarboxyethyl)-AMP + GDP + phosphate + 2 H(+). It participates in purine metabolism; AMP biosynthesis via de novo pathway; AMP from IMP: step 1/2. In terms of biological role, plays an important role in the de novo pathway of purine nucleotide biosynthesis. Catalyzes the first committed step in the biosynthesis of AMP from IMP. The chain is Adenylosuccinate synthetase from Thermococcus sibiricus (strain DSM 12597 / MM 739).